Consider the following 185-residue polypeptide: Protein FAM219A (185 aa).

Position 1 is an N-acetylmethionine (Met1). The segment at 1-131 (MMEEIDRFQV…SRYSSSGYSS (131 aa)) is disordered. At Ser47 the chain carries Phosphoserine. Residues 52-61 (KLEKQRELAR) are compositionally biased toward basic and acidic residues. Over residues 66–80 (KNGSMGSPVNQQPKK) the composition is skewed to polar residues. 2 positions are modified to phosphoserine: Ser72 and Ser102. Thr113 carries the post-translational modification Phosphothreonine. Residues Ser115 and Ser122 each carry the phosphoserine modification. Low complexity predominate over residues 122 to 131 (SRYSSSGYSS).

This sequence belongs to the FAM219 family.

The chain is Protein FAM219A (FAM219A) from Homo sapiens (Human).